The following is a 388-amino-acid chain: L-lactate dehydrogenase (388 aa).

One can recognise an FMN hydroxy acid dehydrogenase domain in the interval 1–380; sequence MIISAASDYR…SADALSRVTR (380 aa). Tyr-24 provides a ligand contact to substrate. FMN is bound by residues Ser-106 and Gln-127. Tyr-129 provides a ligand contact to substrate. Residue Thr-155 coordinates FMN. A substrate-binding site is contributed by Arg-164. Lys-251 provides a ligand contact to FMN. Catalysis depends on His-275, which acts as the Proton acceptor. Arg-278 is a binding site for substrate. Position 306 to 330 (306 to 330) interacts with FMN; the sequence is DSGIRSGLDVVRMLALGADAVLLGR.

It belongs to the FMN-dependent alpha-hydroxy acid dehydrogenase family. FMN is required as a cofactor.

The protein localises to the cell inner membrane. The catalysed reaction is (S)-lactate + A = pyruvate + AH2. Catalyzes the conversion of L-lactate to pyruvate. Is coupled to the respiratory chain. This chain is L-lactate dehydrogenase, found in Xanthomonas axonopodis pv. citri (strain 306).